The following is a 142-amino-acid chain: Large ribosomal subunit protein uL11 (142 aa).

Belongs to the universal ribosomal protein uL11 family. As to quaternary structure, part of the ribosomal stalk of the 50S ribosomal subunit. Interacts with L10 and the large rRNA to form the base of the stalk. L10 forms an elongated spine to which L12 dimers bind in a sequential fashion forming a multimeric L10(L12)X complex. Post-translationally, one or more lysine residues are methylated.

Forms part of the ribosomal stalk which helps the ribosome interact with GTP-bound translation factors. This is Large ribosomal subunit protein uL11 from Rhodopseudomonas palustris (strain BisB18).